The following is a 265-amino-acid chain: Glutamate racemase (265 aa).

Substrate contacts are provided by residues 10 to 11 and 42 to 43; these read DS and YG. Catalysis depends on Cys73, which acts as the Proton donor/acceptor. A substrate-binding site is contributed by 74-75; sequence NT. Cys183 (proton donor/acceptor) is an active-site residue. 184–185 contributes to the substrate binding site; it reads TH.

This sequence belongs to the aspartate/glutamate racemases family.

It carries out the reaction L-glutamate = D-glutamate. It participates in cell wall biogenesis; peptidoglycan biosynthesis. In terms of biological role, provides the (R)-glutamate required for cell wall biosynthesis. The chain is Glutamate racemase from Corynebacterium diphtheriae (strain ATCC 700971 / NCTC 13129 / Biotype gravis).